The chain runs to 345 residues: UDP-3-O-acylglucosamine N-acyltransferase (345 aa).

Residue H252 is the Proton acceptor of the active site.

It belongs to the transferase hexapeptide repeat family. LpxD subfamily. In terms of assembly, homotrimer.

It catalyses the reaction a UDP-3-O-[(3R)-3-hydroxyacyl]-alpha-D-glucosamine + a (3R)-hydroxyacyl-[ACP] = a UDP-2-N,3-O-bis[(3R)-3-hydroxyacyl]-alpha-D-glucosamine + holo-[ACP] + H(+). It functions in the pathway bacterial outer membrane biogenesis; LPS lipid A biosynthesis. Its function is as follows. Catalyzes the N-acylation of UDP-3-O-acylglucosamine using 3-hydroxyacyl-ACP as the acyl donor. Is involved in the biosynthesis of lipid A, a phosphorylated glycolipid that anchors the lipopolysaccharide to the outer membrane of the cell. The chain is UDP-3-O-acylglucosamine N-acyltransferase from Rickettsia rickettsii.